The primary structure comprises 171 residues: MAHFNECAHLIEGVDKAQNEYWDILGDEKDPLQVMLDMQRFLQIRLANVREYCYHPDKLETAGDVVSWMREQKDCIDDEFRELLTSLGEMSRGEKEASAVWKKWKARYIEAQEKRIDEMSPEDQLEIKFELVDIFHFVLNMFVGLGMNAEEIFKLYYLKNKHNFERQDNGY.

The enzyme catalyses dCTP + H2O = dCMP + diphosphate + H(+). This is dCTP pyrophosphatase (56) from Enterobacteria phage T4 (Bacteriophage T4).